The sequence spans 272 residues: AA9 family lytic polysaccharide monooxygenase G (272 aa).

The N-terminal stretch at 1-22 (MKGAGSASFLLTLLSTITRTSA) is a signal peptide. Residue His-23 participates in Cu(2+) binding. Asn-60 carries an N-linked (GlcNAc...) asparagine glycan. 2 cysteine pairs are disulfide-bonded: Cys-78/Cys-202 and Cys-121/Cys-125. His-110 contacts Cu(2+). O2 is bound by residues His-188 and Gln-197. Residue Tyr-199 coordinates Cu(2+).

This sequence belongs to the polysaccharide monooxygenase AA9 family. The cofactor is Cu(2+).

It localises to the secreted. It carries out the reaction [(1-&gt;4)-beta-D-glucosyl]n+m + reduced acceptor + O2 = 4-dehydro-beta-D-glucosyl-[(1-&gt;4)-beta-D-glucosyl]n-1 + [(1-&gt;4)-beta-D-glucosyl]m + acceptor + H2O.. Lytic polysaccharide monooxygenase (LPMO) that depolymerizes crystalline and amorphous polysaccharides via the oxidation of scissile alpha- or beta-(1-4)-glycosidic bonds, yielding C1 or C4 oxidation products. Catalysis by LPMOs requires the reduction of the active-site copper from Cu(II) to Cu(I) by a reducing agent and H(2)O(2) or O(2) as a cosubstrate. Acts preferentially on crystalline regions of cellulose such as highly crystalline algae cellulose. This is AA9 family lytic polysaccharide monooxygenase G from Emericella nidulans (strain FGSC A4 / ATCC 38163 / CBS 112.46 / NRRL 194 / M139) (Aspergillus nidulans).